The chain runs to 57 residues: DNA-directed RNA polymerase subunit Rpo6 (57 aa).

Belongs to the archaeal Rpo6/eukaryotic RPB6 RNA polymerase subunit family. As to quaternary structure, part of the RNA polymerase complex.

It localises to the cytoplasm. The protein localises to the chromosome. The catalysed reaction is RNA(n) + a ribonucleoside 5'-triphosphate = RNA(n+1) + diphosphate. DNA-dependent RNA polymerase (RNAP) catalyzes the transcription of DNA into RNA using the four ribonucleoside triphosphates as substrates. The protein is DNA-directed RNA polymerase subunit Rpo6 of Thermococcus kodakarensis (strain ATCC BAA-918 / JCM 12380 / KOD1) (Pyrococcus kodakaraensis (strain KOD1)).